The sequence spans 412 residues: Arginine biosynthesis bifunctional protein ArgJ (412 aa).

Substrate-binding residues include T158, K184, T195, E284, N407, and S412. Residue T195 is the Nucleophile of the active site.

It belongs to the ArgJ family. Heterotetramer of two alpha and two beta chains.

It is found in the cytoplasm. The catalysed reaction is N(2)-acetyl-L-ornithine + L-glutamate = N-acetyl-L-glutamate + L-ornithine. It catalyses the reaction L-glutamate + acetyl-CoA = N-acetyl-L-glutamate + CoA + H(+). It participates in amino-acid biosynthesis; L-arginine biosynthesis; L-ornithine and N-acetyl-L-glutamate from L-glutamate and N(2)-acetyl-L-ornithine (cyclic): step 1/1. The protein operates within amino-acid biosynthesis; L-arginine biosynthesis; N(2)-acetyl-L-ornithine from L-glutamate: step 1/4. Its function is as follows. Catalyzes two activities which are involved in the cyclic version of arginine biosynthesis: the synthesis of N-acetylglutamate from glutamate and acetyl-CoA as the acetyl donor, and of ornithine by transacetylation between N(2)-acetylornithine and glutamate. The chain is Arginine biosynthesis bifunctional protein ArgJ from Bartonella quintana (strain Toulouse) (Rochalimaea quintana).